Consider the following 365-residue polypeptide: tRNA/tmRNA (uracil-C(5))-methyltransferase (365 aa).

The S-adenosyl-L-methionine site is built by Q189, Y217, N222, E238, and D298. The active-site Nucleophile is the C323. The Proton acceptor role is filled by E357.

The protein belongs to the class I-like SAM-binding methyltransferase superfamily. RNA M5U methyltransferase family. TrmA subfamily.

The catalysed reaction is uridine(54) in tRNA + S-adenosyl-L-methionine = 5-methyluridine(54) in tRNA + S-adenosyl-L-homocysteine + H(+). The enzyme catalyses uridine(341) in tmRNA + S-adenosyl-L-methionine = 5-methyluridine(341) in tmRNA + S-adenosyl-L-homocysteine + H(+). In terms of biological role, dual-specificity methyltransferase that catalyzes the formation of 5-methyluridine at position 54 (m5U54) in all tRNAs, and that of position 341 (m5U341) in tmRNA (transfer-mRNA). This chain is tRNA/tmRNA (uracil-C(5))-methyltransferase, found in Shewanella sediminis (strain HAW-EB3).